Here is a 432-residue protein sequence, read N- to C-terminus: Serine hydroxymethyltransferase (432 aa).

(6S)-5,6,7,8-tetrahydrofolate-binding positions include leucine 127 and glycine 131 to leucine 133. Lysine 236 carries the post-translational modification N6-(pyridoxal phosphate)lysine.

Belongs to the SHMT family. As to quaternary structure, homodimer. Pyridoxal 5'-phosphate is required as a cofactor.

The protein localises to the cytoplasm. It carries out the reaction (6R)-5,10-methylene-5,6,7,8-tetrahydrofolate + glycine + H2O = (6S)-5,6,7,8-tetrahydrofolate + L-serine. Its pathway is one-carbon metabolism; tetrahydrofolate interconversion. It functions in the pathway amino-acid biosynthesis; glycine biosynthesis; glycine from L-serine: step 1/1. In terms of biological role, catalyzes the reversible interconversion of serine and glycine with tetrahydrofolate (THF) serving as the one-carbon carrier. This reaction serves as the major source of one-carbon groups required for the biosynthesis of purines, thymidylate, methionine, and other important biomolecules. Also exhibits THF-independent aldolase activity toward beta-hydroxyamino acids, producing glycine and aldehydes, via a retro-aldol mechanism. The chain is Serine hydroxymethyltransferase from Rhizobium johnstonii (strain DSM 114642 / LMG 32736 / 3841) (Rhizobium leguminosarum bv. viciae).